A 513-amino-acid polypeptide reads, in one-letter code: ATP synthase subunit alpha (513 aa).

An ATP-binding site is contributed by 169–176 (GDRQTGKT).

This sequence belongs to the ATPase alpha/beta chains family. As to quaternary structure, F-type ATPases have 2 components, CF(1) - the catalytic core - and CF(0) - the membrane proton channel. CF(1) has five subunits: alpha(3), beta(3), gamma(1), delta(1), epsilon(1). CF(0) has three main subunits: a(1), b(2) and c(9-12). The alpha and beta chains form an alternating ring which encloses part of the gamma chain. CF(1) is attached to CF(0) by a central stalk formed by the gamma and epsilon chains, while a peripheral stalk is formed by the delta and b chains.

The protein localises to the cell inner membrane. It carries out the reaction ATP + H2O + 4 H(+)(in) = ADP + phosphate + 5 H(+)(out). Functionally, produces ATP from ADP in the presence of a proton gradient across the membrane. The alpha chain is a regulatory subunit. In Shewanella putrefaciens (strain CN-32 / ATCC BAA-453), this protein is ATP synthase subunit alpha.